A 159-amino-acid polypeptide reads, in one-letter code: Transcription antitermination protein NusB (159 aa).

Residues 1–20 (MNKNTQGKPSGKPVRRDGVD) are disordered.

Belongs to the NusB family.

Involved in transcription antitermination. Required for transcription of ribosomal RNA (rRNA) genes. Binds specifically to the boxA antiterminator sequence of the ribosomal RNA (rrn) operons. This is Transcription antitermination protein NusB from Stenotrophomonas maltophilia (strain R551-3).